The chain runs to 72 residues: uncharacterized protein (72 aa).

Its subcellular location is the cytoplasm. It is found in the nucleus. This is an uncharacterized protein from Saccharomyces cerevisiae (strain ATCC 204508 / S288c) (Baker's yeast).